Reading from the N-terminus, the 1969-residue chain is Protein mono-ADP-ribosyltransferase PARP4 (1969 aa).

The BRCT domain maps to 1-94 (MTLGIFANCI…RLLDVRNYDP (94 aa)). The Nuclear localization signal motif lies at 19–25 (PRQQKKK). The segment at 92–132 (YDPLSPAPAAPPAERSRSEVQSEYLPSDNTPEKENTEVTEV) is disordered. The region spanning 235-363 (SEKLQALLLE…ETNLSKPNPP (129 aa)) is the PARP alpha-helical domain. A PARP catalytic domain is found at 362 to 566 (PPSLAKYRAL…FCTPGDQIKE (205 aa)). Residues 600-728 (TNIKAGLQDA…KVLIKITYIT (129 aa)) form the VIT domain. The VWFA domain occupies 869 to 1039 (EVIICLDCSS…KQIEAQMTRI (171 aa)). S1229 carries the post-translational modification Phosphoserine. Positions 1230–1242 (DGHGVLQPVSVSS) match the Nuclear localization signal motif. Pro residues-rich tracts occupy residues 1372-1387 (PPHP…PLPL), 1402-1417 (HPPP…PPPS), 1425-1444 (LPPP…PPIP), 1485-1513 (LPPP…PPPS), and 1521-1540 (LPPP…PPIP). The interval 1372 to 1608 (PPHPLGGTHP…AGTQFSLSPI (237 aa)) is disordered. One can recognise an FH1 domain in the interval 1443–1541 (IPGGTLIPPS…HIPPPPPIPG (99 aa)). A compositionally biased stretch (low complexity) spans 1541-1556 (GGTLIPSPSSLFGGTH). The span at 1557–1585 (LPPPPLLPAGTHIPPPPPITGSTHPPPPS) shows a compositional bias: pro residues. Residues 1808 to 1969 (FCDEDQESPV…LHRILYYSQG (162 aa)) form an interaction with the major vault protein region.

The protein belongs to the ARTD/PARP family. In terms of assembly, component of the vault ribonucleoprotein particle, at least composed of MVP, PARP4 and one or more vault RNAs (vRNAs). Interacts with TEP1.

Its subcellular location is the cytoplasm. The protein localises to the nucleus. It catalyses the reaction L-aspartyl-[protein] + NAD(+) = 4-O-(ADP-D-ribosyl)-L-aspartyl-[protein] + nicotinamide. The catalysed reaction is L-glutamyl-[protein] + NAD(+) = 5-O-(ADP-D-ribosyl)-L-glutamyl-[protein] + nicotinamide. In terms of biological role, mono-ADP-ribosyltransferase that mediates mono-ADP-ribosylation of target proteins. The polypeptide is Protein mono-ADP-ribosyltransferase PARP4 (Mus musculus (Mouse)).